A 511-amino-acid chain; its full sequence is Glucans biosynthesis protein G (511 aa).

Positions 1 to 22 (MMKMRWLSAAVMLTLYTSSSWA) are cleaved as a signal peptide.

Belongs to the OpgD/OpgG family.

Its subcellular location is the periplasm. The protein operates within glycan metabolism; osmoregulated periplasmic glucan (OPG) biosynthesis. Involved in the biosynthesis of osmoregulated periplasmic glucans (OPGs). This is Glucans biosynthesis protein G from Shigella boydii serotype 4 (strain Sb227).